The sequence spans 4138 residues: Fumosorinone synthetase (4138 aa).

In terms of domain architecture, Ketosynthase family 3 (KS3) spans 15-455; it reads PEPIAIVGSA…GTNAHAIIER (441 aa). Active-site for beta-ketoacyl synthase activity residues include Cys189, His328, and His375. A malonyl-CoA:ACP transacylase (MAT) domain region spans residues 590 to 921; sequence VFTGQGAQWP…APDAVSFSTA (332 aa). Positions 990 to 1133 are N-terminal hotdog fold; that stretch reads HELLGRRAVD…GLIDVHLGPR (144 aa). A dehydratase (DH) domain region spans residues 990-1306; sequence HELLGRRAVD…GFEVRSVGER (317 aa). One can recognise a PKS/mFAS DH domain in the interval 990–1309; it reads HELLGRRAVD…VRSVGERDAA (320 aa). His1022 functions as the Proton acceptor; for dehydratase activity in the catalytic mechanism. The segment at 1157–1309 is C-terminal hotdog fold; sequence LQEIDCEKLY…VRSVGERDAA (153 aa). Asp1216 acts as the Proton donor; for dehydratase activity in catalysis. Residues 1456 to 1650 are methyltransferase (MT) domain; it reads RFYAEDKGMQ…FSGADHVAHD (195 aa). The segment at 2205–2379 is ketoreductase (KR) domain; that stretch reads TYLMVGAAGG…AASIIHVGFV (175 aa). Positions 2507–2587 constitute a Carrier 1 domain; sequence EAAAAVRRAF…QLSTLAAKLA (81 aa). Ser2547 is subject to O-(pantetheine 4'-phosphoryl)serine. The segment at 2587–2683 is disordered; that stretch reads ARQQSPRKEG…TEPKTEDKVS (97 aa). A compositionally biased stretch (basic and acidic residues) spans 2610-2621; the sequence is TQDKLVDDKEQK. The span at 2622–2643 shows a compositional bias: polar residues; that stretch reads VQVTSSLAKADSLTQEMQASAH. The segment covering 2647–2659 has biased composition (low complexity); that stretch reads DSATNPTPSSTAS. Positions 2664–2675 are enriched in polar residues; sequence SNSQSTRSTSTE. The tract at residues 2701-3128 is condensation (C) domain; it reads REAPMSAAQA…ASQRVRECAV (428 aa). The tract at residues 3162 to 3564 is adenylation (A) (KR) domain; that stretch reads CQKNSARTAI…DGTLLCFGRI (403 aa). Positions 3680–3759 constitute a Carrier 2 domain; that stretch reads EKMTIQEGEL…GMTRCVLAQR (80 aa). O-(pantetheine 4'-phosphoryl)serine is present on Ser3719. The segment at 3813 to 4045 is reductase (RED) domain; it reads LTGATGFLGG…LDFGTVDAVV (233 aa).

This sequence in the C-terminal section; belongs to the NRP synthetase family.

In terms of biological role, hybrid PKS-NRPS synthetase; part of the gene cluster that mediates the biosynthesis of fumosorinone, a 2-pyridone alkaloid that acts as an inhibitor of protein tyrosine phosphatase 1B which is implicated asa negative regulator of insulin receptor signaling and a potential drug target for the treatment of type II diabetes and other associated metabolic syndromes. The polyketide-amino acid backbone of fumosorinone is first assembled by the PKS-NRPS hybrid fumoS. The PKS modules condense one acetyl-CoA starter unit with 7 malonyl-CoA units, programmed C-methylations occurring after the first 3 and the sixth extensions, and cycles of full reduction occurring after the first 2 extensions. Because fumoS lacks a designated enoyl reductase (ER) domain, the required activity is provided the enoyl reductase fumoC. Upon formation of the polyketide backbone on the thiotemplate, the polyketide is transferred to the NRPS module and linked to tyrosine to produce the acyltetramic acid intermediate called prefumosorinone A. The cytochrome P450 monooxygenase fumoA then probably catalyzes an unprecedented oxidative ring expansion of prefumosorinone A to form prefumosorinone B which contains the 2-pyridone core of fumosorinone. The cytochrome P450 monooxygenase fumoB might hydroxylate the nitrogen of prefumosorinone B, but not the acyltetramic acid prefumosorinone A, to form fumosorinone. The protein is Fumosorinone synthetase of Cordyceps fumosorosea (strain ARSEF 2679) (Isaria fumosorosea).